Consider the following 177-residue polypeptide: Large ribosomal subunit protein uL6 (177 aa).

It belongs to the universal ribosomal protein uL6 family. As to quaternary structure, part of the 50S ribosomal subunit.

This protein binds to the 23S rRNA, and is important in its secondary structure. It is located near the subunit interface in the base of the L7/L12 stalk, and near the tRNA binding site of the peptidyltransferase center. In Vibrio atlanticus (strain LGP32) (Vibrio splendidus (strain Mel32)), this protein is Large ribosomal subunit protein uL6.